The primary structure comprises 504 residues: L-carnitine/gamma-butyrobetaine antiporter (504 aa).

12 consecutive transmembrane segments (helical) span residues 10-30, 51-71, 92-112, 143-163, 195-215, 231-251, 263-283, 316-336, 347-367, 398-418, 446-466, and 475-495; these read IEPKVFFPPLIIVGILCWLTV, WGWAFEWYMVVMLFGWFWLVF, IFMMFASCTSAAVLFWGSIEI, GPLPWATYSFLSVAFAYFFFV, FYLVALIFAMGTSLGLATPLV, LDAIIITCWIILNAICVACGL, SYLSFLMLGWVFIVSGASFIM, WTVFYWAWWVIYAIQMSIFLA, LCFGMVLGLTASTWILWTVLG, WAALPLSTATMWGFFILCFIA, LLVRIGWSILVGIIGIVLLAL, and AIIAGGCPLFFVNIMVTLSFI.

This sequence belongs to the BCCT transporter (TC 2.A.15) family. CaiT subfamily. Homotrimer.

The protein resides in the cell inner membrane. It carries out the reaction 4-(trimethylamino)butanoate(in) + (R)-carnitine(out) = 4-(trimethylamino)butanoate(out) + (R)-carnitine(in). The protein operates within amine and polyamine metabolism; carnitine metabolism. Its function is as follows. Catalyzes the exchange of L-carnitine for gamma-butyrobetaine. In Escherichia coli (strain K12 / MC4100 / BW2952), this protein is L-carnitine/gamma-butyrobetaine antiporter.